The following is a 113-amino-acid chain: Large ribosomal subunit protein uL22 (113 aa).

Belongs to the universal ribosomal protein uL22 family. As to quaternary structure, part of the 50S ribosomal subunit.

In terms of biological role, this protein binds specifically to 23S rRNA; its binding is stimulated by other ribosomal proteins, e.g. L4, L17, and L20. It is important during the early stages of 50S assembly. It makes multiple contacts with different domains of the 23S rRNA in the assembled 50S subunit and ribosome. The globular domain of the protein is located near the polypeptide exit tunnel on the outside of the subunit, while an extended beta-hairpin is found that lines the wall of the exit tunnel in the center of the 70S ribosome. The sequence is that of Large ribosomal subunit protein uL22 from Solibacter usitatus (strain Ellin6076).